The primary structure comprises 560 residues: uncharacterized protein (560 aa).

A run of 5 helical transmembrane segments spans residues 9–29 (LVITILLIVLGANWLLSSFLL), 61–81 (ILVPTGFPLTTGLGLSLKYKI), 136–156 (IGIANSIATVEGFTLSLASMM), 305–325 (SLQIWGKLFAVLLHGGSASFI), and 442–462 (VVLELYCPYAIMGPVAHTNFY).

It is found in the membrane. This is an uncharacterized protein from Saccharomyces cerevisiae (strain ATCC 204508 / S288c) (Baker's yeast).